The primary structure comprises 479 residues: Nuclear receptor subfamily 6 group A member 1 (479 aa).

The segment at 1–32 is disordered; that stretch reads MERDERPPSGGGGGGGSAGFLEPPAALPPPPR. Over residues 9 to 18 the composition is skewed to gly residues; it reads SGGGGGGGSA. Residues 57 to 132 constitute a DNA-binding region (nuclear receptor); that stretch reads QRTCLICGDR…MGMNRKAIRE (76 aa). Zn(2+) contacts are provided by cysteine 60, cysteine 63, cysteine 77, cysteine 80, cysteine 96, cysteine 102, cysteine 112, and cysteine 115. 2 consecutive NR C4-type zinc fingers follow at residues 60-80 and 96-120; these read CLIC…CEGC and CSRD…LLKC. Disordered stretches follow at residues 131–150 and 162–198; these read REDG…QISE and FEEE…TLSS. Positions 165–177 are enriched in basic and acidic residues; the sequence is EANHWSNHGDSDH. The segment at 172 to 252 is sufficient for interaction with UIMC1; sequence HGDSDHSSPG…RSLDPQSYSL (81 aa). The segment covering 178–198 has biased composition (polar residues); sequence SSPGNRASESNQPSPGSTLSS. An NR LBD domain is found at 248 to 479; it reads QSYSLIHQLV…HSCKTSVGKE (232 aa).

This sequence belongs to the nuclear hormone receptor family. NR6 subfamily. As to quaternary structure, homodimer. Interacts with UIMC1.

It is found in the nucleus. Functionally, orphan nuclear receptor that binds to a response element containing the sequence 5'-TCAAGGTCA-3'. Acts as a regulator of embryonic stem cell pluripotency by mediating repression of POU5F1/OCT4: binds to the DR0 element within the POU5F1/OCT4 promoter and inhibits POU5F1/OCT4 expression during embryonic stem cell differentiation. Involved in the regulation of gene expression in germ cell development during gametogenesis. This chain is Nuclear receptor subfamily 6 group A member 1 (NR6A1), found in Sus scrofa (Pig).